The chain runs to 178 residues: MLEGVIRESITKANAKALKKDGYLIANIYGKGVENVNCAFKLNPFIKYLKEKKHLIFPVKLGDKTFEVVVQEYQKNPVTNELIHVDLLAVTKGVKSKFKVPVKHQGTPVGLKNKGILMLSKKRISVECAPEHLPDHYLVDVAPLDVNESILVRDLEKHENVKILDHDSIAVIGVIKAK.

This sequence belongs to the bacterial ribosomal protein bL25 family. CTC subfamily. In terms of assembly, part of the 50S ribosomal subunit; part of the 5S rRNA/L5/L18/L25 subcomplex. Contacts the 5S rRNA. Binds to the 5S rRNA independently of L5 and L18.

Functionally, this is one of the proteins that binds to the 5S RNA in the ribosome where it forms part of the central protuberance. In Helicobacter pylori (strain J99 / ATCC 700824) (Campylobacter pylori J99), this protein is Large ribosomal subunit protein bL25.